The primary structure comprises 158 residues: Small ribosomal subunit protein uS9 (158 aa).

A disordered region spans residues 1-20 (MTEAVETETVEPTTDEATAA). The segment covering 10-20 (VEPTTDEATAA) has biased composition (low complexity).

This sequence belongs to the universal ribosomal protein uS9 family.

In Mycobacterium sp. (strain JLS), this protein is Small ribosomal subunit protein uS9.